Reading from the N-terminus, the 199-residue chain is Protein MM_0484 (199 aa).

The 192-residue stretch at 5–196 (TEGRAAVKLA…EKEPDGEVIE (192 aa)) folds into the AMMECR1 domain.

This is Protein MM_0484 from Methanosarcina mazei (strain ATCC BAA-159 / DSM 3647 / Goe1 / Go1 / JCM 11833 / OCM 88) (Methanosarcina frisia).